The primary structure comprises 524 residues: Bifunctional methyltransferase (524 aa).

Residues 1–306 (MQCSIKQILS…GHSRVILFSP (306 aa)) form a hemK region. The segment at 1 to 308 (MQCSIKQILS…SRVILFSPIN (308 aa)) is RF MTase. S-adenosyl-L-methionine-binding positions include 146 to 150 (GTGSG), aspartate 169, tryptophan 198, asparagine 213, glutamate 353, glutamate 378, asparagine 405, and aspartate 427. 213 to 216 (NPPY) provides a ligand contact to substrate. Residues 307–524 (INLNRSYARR…MILRHVLGDH (218 aa)) are tRNA (guanine-N(7)-)-methyltransferase. A tRNA MTase region spans residues 311–524 (RSYARRIGKS…MILRHVLGDH (214 aa)). Aspartate 427 is a catalytic residue. 2 residues coordinate substrate: lysine 431 and aspartate 463.

This sequence in the C-terminal section; belongs to the class I-like SAM-binding methyltransferase superfamily. TrmB family. The protein in the N-terminal section; belongs to the protein N5-glutamine methyltransferase family. PrmC subfamily.

It catalyses the reaction L-glutaminyl-[peptide chain release factor] + S-adenosyl-L-methionine = N(5)-methyl-L-glutaminyl-[peptide chain release factor] + S-adenosyl-L-homocysteine + H(+). The enzyme catalyses guanosine(46) in tRNA + S-adenosyl-L-methionine = N(7)-methylguanosine(46) in tRNA + S-adenosyl-L-homocysteine. Its function is as follows. Methylates the class 1 translation termination release factors RF1/PrfA and RF2/PrfB on the glutamine residue of the universally conserved GGQ motif. In terms of biological role, catalyzes the formation of N(7)-methylguanine at position 46 (m7G46) in tRNA. In Rickettsia conorii (strain ATCC VR-613 / Malish 7), this protein is Bifunctional methyltransferase (prmC/trmB).